The sequence spans 58 residues: Small ribosomal subunit protein bS21 (58 aa).

Residues 39 to 58 are disordered; sequence EKPSVKRKRKSEVARKRKKF. A compositionally biased stretch (basic residues) spans 43-58; sequence VKRKRKSEVARKRKKF.

This sequence belongs to the bacterial ribosomal protein bS21 family.

This chain is Small ribosomal subunit protein bS21, found in Streptococcus pneumoniae (strain ATCC BAA-255 / R6).